The primary structure comprises 694 residues: Protein NPGR1 (694 aa).

A disordered region spans residues 12-40 (FEDQPGSPESLATRDFSASGLSSRNGGGD). TPR repeat units follow at residues 32–65 (LSSR…SLNY), 66–101 (EEAR…TPRI), 135–168 (LEAI…VENA), 188–221 (QKAL…PWNL), 307–340 (GERW…SESR), 551–584 (TEAW…CYYS), 585–618 (PRGW…EPDH), 620–654 (PSIV…DPRN), and 655–688 (HDAW…ELSA).

Interacts with calmodulin in a calcium-dependent manner. Expressed in pollen, flowers, fruits and leaves.

This chain is Protein NPGR1, found in Arabidopsis thaliana (Mouse-ear cress).